A 216-amino-acid polypeptide reads, in one-letter code: RNA pyrophosphohydrolase (216 aa).

Positions Gly6–Thr149 constitute a Nudix hydrolase domain. A Nudix box motif is present at residues Gly38–Gly59.

This sequence belongs to the Nudix hydrolase family. RppH subfamily. Requires a divalent metal cation as cofactor.

In terms of biological role, accelerates the degradation of transcripts by removing pyrophosphate from the 5'-end of triphosphorylated RNA, leading to a more labile monophosphorylated state that can stimulate subsequent ribonuclease cleavage. The chain is RNA pyrophosphohydrolase from Burkholderia ambifaria (strain MC40-6).